The chain runs to 211 residues: tRNA (guanine-N(7)-)-methyltransferase (211 aa).

4 residues coordinate S-adenosyl-L-methionine: Glu-44, Asp-69, Asp-96, and Asp-118. Asp-118 is a catalytic residue. Lys-122 contacts substrate. Residues 124-129 are interaction with RNA; it reads KHEKRR. Substrate-binding positions include Asp-154 and 191 to 194; that span reads TEYE.

This sequence belongs to the class I-like SAM-binding methyltransferase superfamily. TrmB family.

It catalyses the reaction guanosine(46) in tRNA + S-adenosyl-L-methionine = N(7)-methylguanosine(46) in tRNA + S-adenosyl-L-homocysteine. Its pathway is tRNA modification; N(7)-methylguanine-tRNA biosynthesis. Functionally, catalyzes the formation of N(7)-methylguanine at position 46 (m7G46) in tRNA. This Streptococcus agalactiae serotype Ia (strain ATCC 27591 / A909 / CDC SS700) protein is tRNA (guanine-N(7)-)-methyltransferase.